A 614-amino-acid chain; its full sequence is Numb-like protein (614 aa).

Disordered regions lie at residues 1–68, 223–283, 371–420, 448–468, and 539–614; these read MSRS…QWQA, GSFR…PVAA, FASA…LEEV, QQQQ…LQPF, and LGKA…EIEL. The PID domain maps to 74–223; it reads RKGTCSFPVR…ASRTSFAREG (150 aa). Phosphoserine is present on residues S224 and S228. Residues 233 to 245 show a composition bias toward basic and acidic residues; sequence PAEREAGDKKKAE. Residues 246 to 260 show a composition bias toward low complexity; it reads AAAAPAVAPGPAQPG. Phosphoserine is present on S263. Phosphothreonine is present on T279. Positions 371 to 390 are enriched in low complexity; that stretch reads FASAGAPVPGPPSATTGTSA. Residues 409 to 418 show a composition bias toward basic and acidic residues; it reads TPSEAERWLE. S411 bears the Phosphoserine mark. Residues 563 to 578 show a composition bias toward pro residues; that stretch reads NGAPWPPEPAPAPAPE.

Associates with EPS15 and NOTCH1. Interacts (via PTB domain) with MAP3K7IP2 (via C-terminal). Interacts (via C-terminal) with TRAF6 (via TRAF domains).

It is found in the cytoplasm. Functionally, plays a role in the process of neurogenesis. Required throughout embryonic neurogenesis to maintain neural progenitor cells, also called radial glial cells (RGCs), by allowing their daughter cells to choose progenitor over neuronal cell fate. Not required for the proliferation of neural progenitor cells before the onset of embryonic neurogenesis. Also required postnatally in the subventricular zone (SVZ) neurogenesis by regulating SVZ neuroblasts survival and ependymal wall integrity. Negative regulator of NF-kappa-B signaling pathway. The inhibition of NF-kappa-B activation is mediated at least in part, by preventing MAP3K7IP2 to interact with polyubiquitin chains of TRAF6 and RIPK1 and by stimulating the 'Lys-48'-linked polyubiquitination and degradation of TRAF6 in cortical neurons. The polypeptide is Numb-like protein (Numbl) (Rattus norvegicus (Rat)).